A 396-amino-acid chain; its full sequence is MSKEKFVRNKPHCNIGTIGHVDHGKTTLTAAITITLAELGGGKAVAYDQIDKAPEEKERGITISTAHVEYETEKRHYAHVDCPGHADYVKNMITGAAQMDGAILVVNAADGPMPQTREHILLGRQVGIPAIVVYLNKVDQVDDKDMIELVEEEIRELLTSYKYPGDKTPIVKGSALAAVEGRDEEIGKNSIIELMKAVDEFIPQPTRDIDKPFLMPVEDVFSISGRGTVATGRIESGVIKTGEEVEIVGVTATKKSVCTGVEMFRKLLDSGEAGDNVGILLRGVERDDIQRGQVLCKPASITPHTKFEAQAYVLKKDEGGRHTPFFTKYRPQFYFRTTDVTGEVTLPAGTEMVMPGDDAKFTVTLITPIAMSEKLNFAIREGGRTVGAGVVTKIIE.

A tr-type G domain is found at 10-206 (KPHCNIGTIG…AVDEFIPQPT (197 aa)). The interval 19-26 (GHVDHGKT) is G1. A GTP-binding site is contributed by 19–26 (GHVDHGKT). Thr-26 contributes to the Mg(2+) binding site. Residues 60–64 (GITIS) form a G2 region. Residues 81-84 (DCPG) are G3. Residues 81 to 85 (DCPGH) and 136 to 139 (NKVD) contribute to the GTP site. Residues 136–139 (NKVD) form a G4 region. The G5 stretch occupies residues 174-176 (SAL).

It belongs to the TRAFAC class translation factor GTPase superfamily. Classic translation factor GTPase family. EF-Tu/EF-1A subfamily. In terms of assembly, monomer.

Its subcellular location is the cytoplasm. It carries out the reaction GTP + H2O = GDP + phosphate + H(+). In terms of biological role, GTP hydrolase that promotes the GTP-dependent binding of aminoacyl-tRNA to the A-site of ribosomes during protein biosynthesis. This is Elongation factor Tu from Pelagibacter ubique (strain HTCC1062).